We begin with the raw amino-acid sequence, 445 residues long: Xylose isomerase (445 aa).

Residues H107 and D110 contribute to the active site. Mg(2+) contacts are provided by E238, E274, H277, D302, D313, D315, and D345.

The protein belongs to the xylose isomerase family. Homotetramer. Mg(2+) is required as a cofactor.

It localises to the cytoplasm. The enzyme catalyses alpha-D-xylose = alpha-D-xylulofuranose. The polypeptide is Xylose isomerase (Bacillus cereus (strain ATCC 10987 / NRS 248)).